The following is a 163-amino-acid chain: NADH-quinone oxidoreductase subunit I 1 (163 aa).

4Fe-4S ferredoxin-type domains are found at residues 53 to 83 and 94 to 123; these read LRRY…IEAG and VRYD…EGPN. Positions 63, 66, 69, 73, 103, 106, 109, and 113 each coordinate [4Fe-4S] cluster.

It belongs to the complex I 23 kDa subunit family. NDH-1 is composed of 14 different subunits. Subunits NuoA, H, J, K, L, M, N constitute the membrane sector of the complex. Requires [4Fe-4S] cluster as cofactor.

The protein resides in the cell inner membrane. The enzyme catalyses a quinone + NADH + 5 H(+)(in) = a quinol + NAD(+) + 4 H(+)(out). Functionally, NDH-1 shuttles electrons from NADH, via FMN and iron-sulfur (Fe-S) centers, to quinones in the respiratory chain. The immediate electron acceptor for the enzyme in this species is believed to be ubiquinone. Couples the redox reaction to proton translocation (for every two electrons transferred, four hydrogen ions are translocated across the cytoplasmic membrane), and thus conserves the redox energy in a proton gradient. The chain is NADH-quinone oxidoreductase subunit I 1 from Rhizobium etli (strain ATCC 51251 / DSM 11541 / JCM 21823 / NBRC 15573 / CFN 42).